Reading from the N-terminus, the 379-residue chain is Mannitol-1-phosphate 5-dehydrogenase (379 aa).

3–14 (ALHFGAGNIGRG) contributes to the NAD(+) binding site.

The protein belongs to the mannitol dehydrogenase family.

The catalysed reaction is D-mannitol 1-phosphate + NAD(+) = beta-D-fructose 6-phosphate + NADH + H(+). This Bacillus licheniformis (strain ATCC 14580 / DSM 13 / JCM 2505 / CCUG 7422 / NBRC 12200 / NCIMB 9375 / NCTC 10341 / NRRL NRS-1264 / Gibson 46) protein is Mannitol-1-phosphate 5-dehydrogenase.